The chain runs to 189 residues: MAQLYYKYGTMNSGKTIEILKVAHNYEEQGKPVVIMTSALDTRDGFGIVSSRIGMRREAIPISNDMDIFTFIAQLEEKPYCVLIDESQFLSKQNVYDLARVVDELNVPVMAFGLKNDFQNNLFEGSKHLLLLADKIDEIKTICQYCSKKATMVLRTENGKPVYEGDQIQIGGNETYIPVCRKHYFNPEI.

Residues 9–16 (GTMNSGKT) and 85–88 (DESQ) each bind ATP. The active-site Proton acceptor is the E86. Residues C143, C146, C180, and H183 each coordinate Zn(2+).

Belongs to the thymidine kinase family. As to quaternary structure, homotetramer.

It is found in the cytoplasm. It carries out the reaction thymidine + ATP = dTMP + ADP + H(+). The chain is Thymidine kinase from Streptococcus pyogenes serotype M18 (strain MGAS8232).